Consider the following 271-residue polypeptide: CAAX prenyl protease 2 (271 aa).

Residues 1–9 (MISSYKYNP) lie on the Extracellular side of the membrane. Residues 10–30 (KLYFLSTFVVTYILWFTGAYL) traverse the membrane as a helical segment. Topologically, residues 31–38 (SFSSTYSG) are cytoplasmic. A helical transmembrane segment spans residues 39–59 (IYMLIMLPGLMAPFIISTILI). The Extracellular portion of the chain corresponds to 60-82 (AKSKNNELKKDFINRLFNLKLIN). Residues 83 to 105 (LKTIPVVFLLMPAVILLSILLSI) form a helical membrane-spanning segment. Over 106–125 (PFGGSISQFQFSGGFSFSTD) the chain is Cytoplasmic. Residues 126 to 149 (FVPVLFLLLLAATFEELGWRGYAF) form a helical membrane-spanning segment. Catalysis depends on Glu140, which acts as the Proton donor/acceptor. Residues 150–159 (DSLQSRYSLF) are Extracellular-facing. A helical membrane pass occupies residues 160–179 (KASILFGIFWSLWHFPLIFV). His173 acts as the Proton donor/acceptor in catalysis. Over 180 to 192 (NNSYQYEIFNQSI) the chain is Cytoplasmic. The chain crosses the membrane as a helical span at residues 193-213 (WYGLNFFLSILPMGIIITWMC). Residues 214–219 (LKNRKS) lie on the Extracellular side of the membrane. A helical transmembrane segment spans residues 220 to 237 (IILAIIFHFLINLNQELL). Residues 238–243 (AITQDT) are Cytoplasmic-facing. A helical membrane pass occupies residues 244–263 (KIIETGVLFLVAAAIILYDK). The Extracellular portion of the chain corresponds to 264 to 271 (KMFFEKLG).

This sequence belongs to the peptidase U48 family.

It is found in the cell membrane. The catalysed reaction is Hydrolyzes the peptide bond -P2-(S-farnesyl or geranylgeranyl)C-P1'-P2'-P3'-COOH where P1' and P2' are amino acids with aliphatic sidechains and P3' is any C-terminal residue.. Activity is unaffected by metalloprotease inhibitors 5 mM EDTA and 5 mM Zn(2+). Activity partially inhibited by 1,10-phenanthroline and 1,7-phenanthroline. Functionally, protease involved in the processing of a variety of prenylated proteins containing the C-terminal CAAX motif, where C is a cysteine modified with an isoprenoid lipid, A is an aliphatic amino acid and X is any C-terminal amino acid. Proteolytically removes the C-terminal three residues of farnesylated proteins, leaving the prenylated cysteine as the new C-terminus. Hydrolysis depends on a farnesylated cysteine residue and no activity is shown towards geranylgeranylated peptides. The chain is CAAX prenyl protease 2 from Methanococcus maripaludis (strain DSM 14266 / JCM 13030 / NBRC 101832 / S2 / LL).